Reading from the N-terminus, the 202-residue chain is ATP-dependent Clp protease proteolytic subunit (202 aa).

Ser98 acts as the Nucleophile in catalysis. Residue His123 is part of the active site.

The protein belongs to the peptidase S14 family. Fourteen ClpP subunits assemble into 2 heptameric rings which stack back to back to give a disk-like structure with a central cavity, resembling the structure of eukaryotic proteasomes.

Its subcellular location is the cytoplasm. It carries out the reaction Hydrolysis of proteins to small peptides in the presence of ATP and magnesium. alpha-casein is the usual test substrate. In the absence of ATP, only oligopeptides shorter than five residues are hydrolyzed (such as succinyl-Leu-Tyr-|-NHMec, and Leu-Tyr-Leu-|-Tyr-Trp, in which cleavage of the -Tyr-|-Leu- and -Tyr-|-Trp bonds also occurs).. Functionally, cleaves peptides in various proteins in a process that requires ATP hydrolysis. Has a chymotrypsin-like activity. Plays a major role in the degradation of misfolded proteins. The chain is ATP-dependent Clp protease proteolytic subunit from Magnetococcus marinus (strain ATCC BAA-1437 / JCM 17883 / MC-1).